Reading from the N-terminus, the 324-residue chain is Aquaporin-4 (324 aa).

Residues 1–36 (MSDRPAARPWGKCGSLCRREEIMVAFKGVWTQAFWK) lie on the Cytoplasmic side of the membrane. Residues cysteine 13 and cysteine 17 are each lipidated (S-palmitoyl cysteine). Residues 37–57 (AVTAEFLAMLIFVLLSLGSTI) form a helical membrane-spanning segment. The Extracellular portion of the chain corresponds to 58 to 69 (NWGGKENPLPVD). Residues 70-89 (MVLISLCFGLSIATMVQCFG) form a helical membrane-spanning segment. The Cytoplasmic segment spans residues 90–93 (HISG). An intramembrane region (discontinuously helical) is located at residues 94-101 (GHINPAVT). An NPA 1 motif is present at residues 97–99 (NPA). The Cytoplasmic portion of the chain corresponds to 102 to 115 (VAMVCTRKISIAKS). Serine 111 is subject to Phosphoserine; by PKG. A helical membrane pass occupies residues 116–136 (VFYIAAQCLGAIIGAGILYLV). Topologically, residues 137–155 (TPPSVVGGLGVTTVHGNLT) are extracellular. A glycan (N-linked (GlcNAc...) asparagine) is linked at asparagine 153. A helical membrane pass occupies residues 156–176 (AGHGLLVELIITFQLVFTIFA). The Cytoplasmic portion of the chain corresponds to 177–184 (SCDSKRTD). Position 180 is a phosphoserine; by PKC (serine 180). Residues 185 to 205 (VTGSIALAIGFSVAIGHLFAI) traverse the membrane as a helical segment. N-linked (GlcNAc...) asparagine glycosylation is present at asparagine 206. The Extracellular segment spans residues 206-208 (NYT). An intramembrane region (discontinuously helical) is located at residues 209 to 222 (GASMNPARSFGPAV). The short motif at 213–215 (NPA) is the NPA 2 element. Residues 223 to 231 (IMGNWENHW) are Extracellular-facing. The chain crosses the membrane as a helical span at residues 232–252 (IYWVGPIIGAVLAGGLYEYVF). Residues 253 to 324 (CPDVELKRRF…PSGEIAQTQH (72 aa)) lie on the Cytoplasmic side of the membrane. Phosphoserine occurs at positions 276 and 285. Residue threonine 289 is modified to Phosphothreonine. The span at 305 to 316 (DRGDEKKGKDPS) shows a compositional bias: basic and acidic residues. The segment at 305–324 (DRGDEKKGKDPSGEIAQTQH) is disordered.

It belongs to the MIP/aquaporin (TC 1.A.8) family. In terms of assembly, homotetramer. The tetramers can form oligomeric arrays in membranes. The size of the oligomers differs between tissues and is smaller in skeletal muscle than in brain. Interaction between AQP4 oligomeric arrays in close-by cells can contribute to cell-cell adhesion. Part of a complex containing MLC1, TRPV4, HEPACAM and ATP1B1. In terms of processing, phosphorylation by PKC at Ser-180 reduces conductance by 50%. Phosphorylation by PKG at Ser-111 in response to glutamate increases conductance by 40%. Post-translationally, isoform 2: Palmitoylated on its N-terminal region. Isoform 1: Not palmitoylated. In terms of tissue distribution, not expressed in kidney, Detectable in gastric parietal and brain astroglial cells. The absence of AQP4 in kidney may be critical for the extreme urinary concentration that occurs in this species (up to 5,000 mosmol/kg H(2)O).

It localises to the cell membrane. Its subcellular location is the basolateral cell membrane. The protein localises to the endosome membrane. It is found in the sarcolemma. The protein resides in the cell projection. The enzyme catalyses H2O(in) = H2O(out). Functionally, forms a water-specific channel. Plays an important role in brain water homeostasis and in glymphatic solute transport. Required for a normal rate of water exchange across the blood brain interface. Required for normal levels of cerebrospinal fluid influx into the brain cortex and parenchyma along paravascular spaces that surround penetrating arteries, and for normal drainage of interstitial fluid along paravenous drainage pathways. Thereby, it is required for normal clearance of solutes from the brain interstitial fluid, including soluble beta-amyloid peptides derived from APP. Plays a redundant role in urinary water homeostasis and urinary concentrating ability. This is Aquaporin-4 (AQP4) from Dipodomys merriami (Merriam's kangaroo rat).